The primary structure comprises 252 residues: Phosphoglycolate phosphatase (252 aa).

Asp-13 (nucleophile) is an active-site residue. Asp-13, Asp-15, and Asp-192 together coordinate Mg(2+).

It belongs to the HAD-like hydrolase superfamily. CbbY/CbbZ/Gph/YieH family. As to quaternary structure, monomer. It depends on Mg(2+) as a cofactor. Chloride serves as cofactor.

It catalyses the reaction 2-phosphoglycolate + H2O = glycolate + phosphate. The protein operates within organic acid metabolism; glycolate biosynthesis; glycolate from 2-phosphoglycolate: step 1/1. In terms of biological role, specifically catalyzes the dephosphorylation of 2-phosphoglycolate. Is involved in the dissimilation of the intracellular 2-phosphoglycolate formed during the DNA repair of 3'-phosphoglycolate ends, a major class of DNA lesions induced by oxidative stress. This Salmonella choleraesuis (strain SC-B67) protein is Phosphoglycolate phosphatase.